The primary structure comprises 519 residues: Zinc finger protein 692 (519 aa).

Positions 123-314 (GPSLSPTPSE…PAWDEDTAQI (192 aa)) are disordered. The span at 145–155 (RSWCSEATSGQ) shows a compositional bias: polar residues. The residue at position 162 (serine 162) is a Phosphoserine. Residues 164 to 173 (HDERTQEARL) show a composition bias toward basic and acidic residues. Residues 177–187 (VGPPPETFPPP) are compositionally biased toward pro residues. Over residues 188-206 (GEEEGEEEEDNDEDEEEML) the composition is skewed to acidic residues. Position 231 is a phosphoserine (serine 231). A compositionally biased stretch (low complexity) spans 247-266 (AALSSPLAVPALSASSLSSR). Over residues 277–303 (PQLSRTPQAAQQTEALASTGSQAQSAP) the composition is skewed to polar residues. 5 C2H2-type zinc fingers span residues 328–353 (MPCDFPGCGRIFSNRQYLNHHKKYQH), 359–383 (FSCPEPACGKSFNFKKHLKEHMKLH), 389–411 (YICEFCARSFRTSSNLVIHRRIH), 417–439 (LQCEICGFTCRQKASLNWHQRKH), and 448–471 (FPCEFCGKRFEKPDSVAAHRSKSH). Residues 469 to 519 (KSHPALLLAPQESPSGPLEPCPSISAPGPLGSSEGSRPSASPQAPTLLPQQ) form a disordered region. The residue at position 470 (serine 470) is a Phosphoserine; by AMPK. Over residues 501 to 519 (SEGSRPSASPQAPTLLPQQ) the composition is skewed to polar residues.

The protein belongs to the krueppel C2H2-type zinc-finger protein family. Phosphorylation at Ser-470 results in loss of DNA-binding activity. Ubiquitous. Highly expressed in brain, thymus and spleen.

It localises to the nucleus. May act as an transcriptional repressor for PCK1 gene expression, in turn may participate in the hepatic gluconeogenesis regulation through the activated AMPK signaling pathway. The chain is Zinc finger protein 692 (ZNF692) from Homo sapiens (Human).